Consider the following 152-residue polypeptide: Transcriptional repressor NrdR (152 aa).

A zinc finger lies at 3–34 (CPFCNHGELKVIDSRNSPEANAIKRRRECLRC). One can recognise an ATP-cone domain in the interval 48–138 (IQVLKRDGRY…VYRRFRDVGE (91 aa)).

This sequence belongs to the NrdR family. Requires Zn(2+) as cofactor.

Its function is as follows. Negatively regulates transcription of bacterial ribonucleotide reductase nrd genes and operons by binding to NrdR-boxes. The sequence is that of Transcriptional repressor NrdR from Chlamydia muridarum (strain MoPn / Nigg).